The sequence spans 383 residues: Chaperone protein DnaJ (383 aa).

The 66-residue stretch at 5-70 folds into the J domain; the sequence is DYYEVLGVAK…EKRAAYDRFG (66 aa). Residues 139–217 form a CR-type zinc finger; the sequence is GKTETIRIPT…CSGAGRVNRE (79 aa). Zn(2+)-binding residues include cysteine 152, cysteine 155, cysteine 169, cysteine 172, cysteine 191, cysteine 194, cysteine 205, and cysteine 208. 4 CXXCXGXG motif repeats span residues 152 to 159, 169 to 176, 191 to 198, and 205 to 212; these read CEACSGTG, CSTCGGYG, CPNCHGRG, and CTACSGAG.

This sequence belongs to the DnaJ family. Homodimer. It depends on Zn(2+) as a cofactor.

The protein localises to the cytoplasm. Its function is as follows. Participates actively in the response to hyperosmotic and heat shock by preventing the aggregation of stress-denatured proteins and by disaggregating proteins, also in an autonomous, DnaK-independent fashion. Unfolded proteins bind initially to DnaJ; upon interaction with the DnaJ-bound protein, DnaK hydrolyzes its bound ATP, resulting in the formation of a stable complex. GrpE releases ADP from DnaK; ATP binding to DnaK triggers the release of the substrate protein, thus completing the reaction cycle. Several rounds of ATP-dependent interactions between DnaJ, DnaK and GrpE are required for fully efficient folding. Also involved, together with DnaK and GrpE, in the DNA replication of plasmids through activation of initiation proteins. This chain is Chaperone protein DnaJ, found in Methylorubrum populi (strain ATCC BAA-705 / NCIMB 13946 / BJ001) (Methylobacterium populi).